The following is a 540-amino-acid chain: Malolactic enzyme (540 aa).

Tyr-90 acts as the Proton donor in catalysis. The active-site Proton acceptor is Lys-163. Lys-163 contacts substrate. Residues Glu-234, Asp-235, and Asp-258 each coordinate Mn(2+). Residues Gly-291–Ala-294, Asn-403, and Asn-448 contribute to the NAD(+) site. Asn-448 contacts substrate.

This sequence belongs to the malic enzymes family. As to quaternary structure, homodimer. Mn(2+) is required as a cofactor. The cofactor is NAD(+).

It carries out the reaction (S)-malate + H(+) = (S)-lactate + CO2. In terms of biological role, involved in the malolactic fermentation (MLF) of wine, which results in a natural decrease in acidity and favorable changes in wine flavors. Catalyzes the decarboxylation of L-malate to L-lactate. The polypeptide is Malolactic enzyme (Lactococcus lactis subsp. lactis (strain IL1403) (Streptococcus lactis)).